The following is a 1148-amino-acid chain: Zinc finger CCCH domain-containing protein 18 (1148 aa).

A compositionally biased stretch (low complexity) spans 1–13; sequence MDTPESPTQSPQS. Disordered stretches follow at residues 1 to 315, 380 to 417, and 521 to 1127; these read MDTP…PMDR, DPFS…LPPP, and YTET…REEL. 2 stretches are compositionally biased toward basic and acidic residues: residues 53-73 and 82-96; these read VPEH…AGRE and EDYK…DIHQ. Acidic residues-rich tracts occupy residues 144 to 156 and 167 to 176; these read ERGD…EEDE and ELEEEEDEEE. Positions 190–202 are enriched in basic and acidic residues; it reads DLKDESSVSRDLD. Acidic residues-rich tracts occupy residues 203-214 and 233-245; these read EHELDYDEEVPE and EDGE…DEEE. Over residues 261–289 the composition is skewed to basic and acidic residues; that stretch reads DNRDTPLRKSEDSREGGRRDSFRDKKKEE. The segment covering 290–306 has biased composition (acidic residues); that stretch reads DDGEIDEGEIDDDDLEE. The span at 388 to 397 shows a compositional bias: gly residues; the sequence is PPGGAAGGGP. Basic and acidic residues predominate over residues 530-615; the sequence is PDRERERDPR…EKKDEKEKTL (86 aa). Positions 543–584 form a coiled coil; sequence RERERERERDHRERERRQREREREREREREKDSRRRKDEWDR. Pro residues predominate over residues 622 to 631; that stretch reads NMPPRGPMEP. Residues 632–646 are compositionally biased toward basic and acidic residues; it reads PTKKDMLSVTKRPDE. At S666 the chain carries Phosphoserine. Low complexity predominate over residues 677 to 740; it reads SGSSVSLSNS…SRSGSFSSSP (64 aa). Pro residues-rich tracts occupy residues 783–800 and 807–817; these read KVMP…PPKP and PPNPRPPGRPP. Residues 818 to 833 show a composition bias toward basic and acidic residues; it reads GPREPREPPNMREGRK. Low complexity-rich tracts occupy residues 847–875, 882–903, and 914–925; these read VSGS…ASRS, SLSV…SVRS, and ASPVSSASSRSP. Composition is skewed to basic and acidic residues over residues 933–964 and 1012–1029; these read DRGP…KRVD and QTDR…KERP. Residue S1056 is modified to Phosphoserine. Composition is skewed to low complexity over residues 1083–1098 and 1107–1119; these read PAKS…SAAK and GSAS…KPSS. A coiled-coil region spans residues 1118–1146; the sequence is SSTLSRREELLKQLKAVEDAIARKRAKIP.

It localises to the nucleus. This chain is Zinc finger CCCH domain-containing protein 18 (zc3h18), found in Danio rerio (Zebrafish).